The primary structure comprises 304 residues: Protein INO2 (304 aa).

Residues V236–I290 enclose the bHLH domain.

As to quaternary structure, efficient DNA binding requires dimerization with another bHLH protein.

Its subcellular location is the nucleus. Its function is as follows. Positive regulatory factor required for depression of the coregulated phospholipid biosynthetic enzymes. Also involved in the expression of ITR1. This is Protein INO2 (INO2) from Saccharomyces cerevisiae (strain ATCC 204508 / S288c) (Baker's yeast).